Reading from the N-terminus, the 152-residue chain is Snaclec agkisacutacin subunit A (152 aa).

A signal peptide spans 1–23 (MGRFIFVSFGLLVVFLSLSGTAA). The 129-residue stretch at 24-152 (DCSSGWSSYE…EQQDPFVCEA (129 aa)) folds into the C-type lectin domain. 3 disulfide bridges follow: cysteine 25-cysteine 36, cysteine 53-cysteine 150, and cysteine 125-cysteine 142. Ca(2+)-binding residues include serine 64, glutamate 66, and glutamate 70. Glutamate 151 is a binding site for Ca(2+).

This sequence belongs to the snaclec family. In terms of assembly, heterodimer with subunit B of AaACP or agkisacutacin; disulfide-linked. As to expression, expressed by the venom gland.

It localises to the secreted. Functionally, anticoagulant protein which binds to the gamma-carboxyglutamic acid-domain regions of factors IX (F9) and factor X (F10) in the presence of calcium with a 1 to 1 stoichiometry. Also inhibits platelet aggregation by binding to platelet glycoprotein Ibalpha (GP1BA) and functioning as a blocker of von Willebrand factor (VWF). Is devoid of hemorrhagic and lethal activities. Possesses antithrombotic and thrombolytic activities. Also hydrolyzes the Aalpha-chain of fibrinogen (FGA). Does not affect the Bbeta-chain (FGB) and the gamma chain (FGG). The protein is Snaclec agkisacutacin subunit A of Deinagkistrodon acutus (Hundred-pace snake).